The primary structure comprises 284 residues: Pantothenate synthetase (284 aa).

30 to 37 (MGNLHEGH) serves as a coordination point for ATP. Histidine 37 (proton donor) is an active-site residue. Position 61 (glutamine 61) interacts with (R)-pantoate. Position 61 (glutamine 61) interacts with beta-alanine. 149 to 152 (GEKD) is a binding site for ATP. Glutamine 155 is a (R)-pantoate binding site. ATP contacts are provided by residues valine 178 and 186–189 (LSSR).

Belongs to the pantothenate synthetase family. Homodimer.

It localises to the cytoplasm. The catalysed reaction is (R)-pantoate + beta-alanine + ATP = (R)-pantothenate + AMP + diphosphate + H(+). Its pathway is cofactor biosynthesis; (R)-pantothenate biosynthesis; (R)-pantothenate from (R)-pantoate and beta-alanine: step 1/1. Functionally, catalyzes the condensation of pantoate with beta-alanine in an ATP-dependent reaction via a pantoyl-adenylate intermediate. This Yersinia pestis bv. Antiqua (strain Antiqua) protein is Pantothenate synthetase.